The sequence spans 252 residues: Small ribosomal subunit protein uS3 (252 aa).

One can recognise a KH type-2 domain in the interval 39-111 (IRKLINNFTK…DVNLNVLEVK (73 aa)). The tract at residues 222–252 (KPFASQSSNTPNRRPRNFKGGNNNHVNAKKN) is disordered. Over residues 241 to 252 (GGNNNHVNAKKN) the composition is skewed to polar residues.

The protein belongs to the universal ribosomal protein uS3 family. In terms of assembly, part of the 30S ribosomal subunit. Forms a tight complex with proteins S10 and S14.

Functionally, binds the lower part of the 30S subunit head. Binds mRNA in the 70S ribosome, positioning it for translation. The sequence is that of Small ribosomal subunit protein uS3 from Onion yellows phytoplasma (strain OY-M).